Here is a 431-residue protein sequence, read N- to C-terminus: L-lysine N6-monooxygenase MbtG (431 aa).

Residues 1–21 form the signal peptide; it reads MNPTLAVLGAGAKAVAVAAKA.

This sequence belongs to the lysine N(6)-hydroxylase/L-ornithine N(5)-oxygenase family. The cofactor is FAD.

The catalysed reaction is L-lysine + NADPH + O2 = N(6)-hydroxy-L-lysine + NADP(+) + H2O. The protein operates within siderophore biosynthesis; mycobactin biosynthesis. Flavoprotein monooxygenase required for N-hydroxylation of the two acylated lysine residues during mycobactin assembly, thus producing the hydroxamate groups necessary for iron sequestration. Is also able, but less efficiently, to hydroxylate L-lysine (non acylated) in vitro. In Mycobacterium bovis (strain ATCC BAA-935 / AF2122/97), this protein is L-lysine N6-monooxygenase MbtG (mbtG).